Here is a 410-residue protein sequence, read N- to C-terminus: Elongation factor Tu, chloroplastic (410 aa).

The tr-type G domain occupies 10–215 (KPHINIGTIG…MVDKYFPTPE (206 aa)). The G1 stretch occupies residues 19 to 26 (GHVDHGKT). 19–26 (GHVDHGKT) is a GTP binding site. Threonine 26 serves as a coordination point for Mg(2+). The interval 61-65 (GITIN) is G2. The G3 stretch occupies residues 82-85 (DCPG). Residues 82–86 (DCPGH) and 137–140 (NKAD) each bind GTP. The interval 137–140 (NKAD) is G4. The tract at residues 175–177 (SAL) is G5.

Belongs to the TRAFAC class translation factor GTPase superfamily. Classic translation factor GTPase family. EF-Tu/EF-1A subfamily.

The protein resides in the plastid. Its subcellular location is the chloroplast. It carries out the reaction GTP + H2O = GDP + phosphate + H(+). Functionally, GTP hydrolase that promotes the GTP-dependent binding of aminoacyl-tRNA to the A-site of ribosomes during protein biosynthesis. This Cyanidium caldarium (Red alga) protein is Elongation factor Tu, chloroplastic (tufA).